The chain runs to 179 residues: ATP-dependent protease subunit HslV (179 aa).

Residue T8 is part of the active site. Na(+) contacts are provided by S164, C167, and T170.

The protein belongs to the peptidase T1B family. HslV subfamily. As to quaternary structure, a double ring-shaped homohexamer of HslV is capped on each side by a ring-shaped HslU homohexamer. The assembly of the HslU/HslV complex is dependent on binding of ATP.

The protein resides in the cytoplasm. It carries out the reaction ATP-dependent cleavage of peptide bonds with broad specificity.. Allosterically activated by HslU binding. In terms of biological role, protease subunit of a proteasome-like degradation complex believed to be a general protein degrading machinery. In Staphylococcus carnosus (strain TM300), this protein is ATP-dependent protease subunit HslV.